The chain runs to 303 residues: Tumor necrosis factor receptor type 1-associated DEATH domain protein (303 aa).

The Nuclear export signal signature appears at 141-157 (QKDDELAEIDERLKSIK). In terms of domain architecture, Death spans 208–298 (TSAHIQHFAK…SIALDLLSLN (91 aa)). Residues 224 to 237 (KPVGRSLGKTCRAL) carry the Nuclear localization signal motif.

In terms of assembly, heterodimer with tnfrsf1a.

It localises to the nucleus. The protein localises to the cytoplasm. Its subcellular location is the cytoskeleton. Adapter molecule for tnfrsf1a that specifically associates with the cytoplasmic domain of activated tnfrsf1a mediating its interaction with fadd. The chain is Tumor necrosis factor receptor type 1-associated DEATH domain protein from Xenopus laevis (African clawed frog).